The chain runs to 530 residues: S-adenosylhomocysteine hydrolase-like protein 1 (530 aa).

Residue Met-1 is modified to N-acetylmethionine. Residue Ser-2 is modified to N-acetylserine. A Phosphoserine modification is found at Ser-2. N6-acetyllysine is present on Lys-40. The segment at 53–103 (KFPTKTGRRSLSRSISQSSTDSYSSAASYTDSSDDEVSPREKQQTNSKGSS) is disordered. Residues 64 to 83 (SRSISQSSTDSYSSAASYTD) show a composition bias toward low complexity. Residues 65–92 (RSISQSSTDSYSSAASYTDSSDDEVSPR) are PEST. 5 positions are modified to phosphoserine: Ser-68, Ser-71, Ser-74, Ser-77, and Ser-84. An interaction with BCL2L10 region spans residues 138-201 (QGEKPLAGAK…EAGVAVFAWK (64 aa)). The substrate site is built by Thr-155, Asp-229, Glu-254, Lys-284, and Asp-288. The NAD binding stretch occupies residues 281 to 448 (SVTKQKFDNL…EGRLLNLSCS (168 aa)). Residues 318–322 (GYGEV), Glu-341, and Asn-376 contribute to the NAD(+) site. Ser-391 is subject to Phosphoserine. 397-399 (MGH) serves as a coordination point for NAD(+). Residues 520–530 (NGPFKPNYYRY) are PDZ-binding.

Belongs to the adenosylhomocysteinase family. As to quaternary structure, forms multimers. Forms heteromultimers with AHCYL2 (via the C-terminal region). Interacts (when phosphorylated) with ITPR1 (when not phosphorylated); the interaction suppresses inositol 1,4,5-trisphosphate binding to ITPR1. Interacts with BCL2L10; this strengthens the interaction of AHCYL1 with ITPR1. Interacts with CFTR and SLC26A6; the interactions take place once AHCYL1 is released from ITPR1 and increase CFTR and SLC26A6 activities. Interacts with RRM1; in a phosphorylation- and (dATP)-dependent manner. Interacts (via PEST domain when phosphorylated) with SLC4A4 isoform 1 but not isoform 2; the interaction increases SLC4A4 isoform 1 activity. Interacts (when phosphorylated) with SLC9A3; the interaction is required for SLC9A3 apical location and activity. Interacts (when phosphorylated) with FIP1L1; the interaction is direct and associates AHCYL1 with the CPSF complex and RNA. Interacts with PAPOLA. Interacts with ZCCHC4. Interacts with AHCY. The cofactor is NAD(+). Post-translationally, phosphorylated at Ser/Thr residues between Ser-68 and Thr-72 in the PEST region: required for interaction with dATP-bound RRM1 and ITPR1. Phosphorylation at Ser-68 by PRKD1 and CAMK4 is required for further phosphorylations by CSNK1A1. Phosphorylation is induced by oxidative stress. Probably phosphorylated by CAMK2A; phosphorylation at Ser-68 may be required for interaction with SLC9A3. Dephosphorylated in response to apoptotic stress conditions which causes translocation of both AHCYL1 and BCL2L10 from mitochondria-associated endoplasmic reticulum membranes and promotes apoptosis. Expressed in dendritic cells.

The protein resides in the endoplasmic reticulum. The protein localises to the cytoplasm. It is found in the cytosol. It localises to the apical cell membrane. Its subcellular location is the microsome. In terms of biological role, multifaceted cellular regulator which coordinates several essential cellular functions including regulation of epithelial HCO3(-) and fluid secretion, mRNA processing and DNA replication. Regulates ITPR1 sensitivity to inositol 1,4,5-trisphosphate, competing for the common binding site and acting as endogenous 'pseudoligand' whose inhibitory activity can be modulated by its phosphorylation status. Promotes the formation of contact points between the endoplasmic reticulum (ER) and mitochondria, facilitating transfer of Ca(2+) from the ER to mitochondria. Under normal cellular conditions, functions cooperatively with BCL2L10 to limit ITPR1-mediated Ca(2+) release but, under apoptotic stress conditions, dephosphorylated which promotes dissociation of both AHCYL1 and BCL2L10 from mitochondria-associated endoplasmic reticulum membranes, inhibits BCL2L10 interaction with ITPR1 and leads to increased Ca(2+) transfer to mitochondria which promotes apoptosis. In the pancreatic and salivary ducts, at resting state, attenuates inositol 1,4,5-trisphosphate-induced calcium release by interacting with ITPR1. When extracellular stimuli induce ITPR1 phosphorylation or inositol 1,4,5-trisphosphate production, dissociates from ITPR1 to interact with CFTR and SLC26A6, mediating their synergistic activation by calcium and cAMP that stimulates the epithelial secretion of electrolytes and fluid. Also activates basolateral SLC4A4 isoform 1 to coordinate fluid and HCO3(-) secretion. Inhibits the effect of STK39 on SLC4A4 and CFTR by recruiting PP1 phosphatase which activates SLC4A4, SLC26A6 and CFTR through dephosphorylation. Mediates the induction of SLC9A3 surface expression produced by Angiotensin-2. Depending on the cell type, activates SLC9A3 in response to calcium or reverses SLC9A3R2-dependent calcium inhibition. May modulate the polyadenylation state of specific mRNAs, both by controlling the subcellular location of FIP1L1 and by inhibiting PAPOLA activity, in response to a stimulus that alters its phosphorylation state. Acts as a (dATP)-dependent inhibitor of ribonucleotide reductase large subunit RRM1, controlling the endogenous dNTP pool and ensuring normal cell cycle progression. In vitro does not exhibit any S-adenosyl-L-homocysteine hydrolase activity. The protein is S-adenosylhomocysteine hydrolase-like protein 1 of Homo sapiens (Human).